Consider the following 288-residue polypeptide: ATP phosphoribosyltransferase (288 aa).

The protein belongs to the ATP phosphoribosyltransferase family. Long subfamily. Mg(2+) serves as cofactor.

It is found in the cytoplasm. The catalysed reaction is 1-(5-phospho-beta-D-ribosyl)-ATP + diphosphate = 5-phospho-alpha-D-ribose 1-diphosphate + ATP. It participates in amino-acid biosynthesis; L-histidine biosynthesis; L-histidine from 5-phospho-alpha-D-ribose 1-diphosphate: step 1/9. With respect to regulation, feedback inhibited by histidine. Functionally, catalyzes the condensation of ATP and 5-phosphoribose 1-diphosphate to form N'-(5'-phosphoribosyl)-ATP (PR-ATP). Has a crucial role in the pathway because the rate of histidine biosynthesis seems to be controlled primarily by regulation of HisG enzymatic activity. The protein is ATP phosphoribosyltransferase (hisG) of Methanocaldococcus jannaschii (strain ATCC 43067 / DSM 2661 / JAL-1 / JCM 10045 / NBRC 100440) (Methanococcus jannaschii).